A 209-amino-acid polypeptide reads, in one-letter code: Methylthioribulose-1-phosphate dehydratase (209 aa).

2 residues coordinate Zn(2+): H98 and H100.

Belongs to the aldolase class II family. MtnB subfamily. As to quaternary structure, homotetramer. Zn(2+) serves as cofactor.

The enzyme catalyses 5-(methylsulfanyl)-D-ribulose 1-phosphate = 5-methylsulfanyl-2,3-dioxopentyl phosphate + H2O. It functions in the pathway amino-acid biosynthesis; L-methionine biosynthesis via salvage pathway; L-methionine from S-methyl-5-thio-alpha-D-ribose 1-phosphate: step 2/6. Catalyzes the dehydration of methylthioribulose-1-phosphate (MTRu-1-P) into 2,3-diketo-5-methylthiopentyl-1-phosphate (DK-MTP-1-P). The chain is Methylthioribulose-1-phosphate dehydratase (mtnB) from Bacillus subtilis (strain 168).